The primary structure comprises 192 residues: Protein hunchback (192 aa).

Disordered stretches follow at residues 16-54 (SHHH…SNTN) and 152-192 (LTPP…KYMA). A compositionally biased stretch (basic residues) spans 17–28 (HHHHHHHAHHSH). Positions 32-41 (SNSNASSPHQ) are enriched in low complexity. Basic and acidic residues predominate over residues 173-192 (EPEKEHDLMSNSSEDMKYMA).

This sequence belongs to the hunchback C2H2-type zinc-finger protein family.

It localises to the nucleus. Functionally, gap class segmentation protein that controls development of head structures. This chain is Protein hunchback (hb), found in Drosophila tanythrix (Fruit fly).